The following is a 277-amino-acid chain: Putative hydro-lyase SCO1412 (277 aa).

Belongs to the D-glutamate cyclase family.

This chain is Putative hydro-lyase SCO1412, found in Streptomyces coelicolor (strain ATCC BAA-471 / A3(2) / M145).